A 373-amino-acid chain; its full sequence is Histidinol-phosphate aminotransferase 2 (373 aa).

K229 carries the N6-(pyridoxal phosphate)lysine modification.

Belongs to the class-II pyridoxal-phosphate-dependent aminotransferase family. Histidinol-phosphate aminotransferase subfamily. Homodimer. The cofactor is pyridoxal 5'-phosphate.

The catalysed reaction is L-histidinol phosphate + 2-oxoglutarate = 3-(imidazol-4-yl)-2-oxopropyl phosphate + L-glutamate. It functions in the pathway amino-acid biosynthesis; L-histidine biosynthesis; L-histidine from 5-phospho-alpha-D-ribose 1-diphosphate: step 7/9. The sequence is that of Histidinol-phosphate aminotransferase 2 from Hydrogenovibrio crunogenus (strain DSM 25203 / XCL-2) (Thiomicrospira crunogena).